Reading from the N-terminus, the 737-residue chain is uncharacterized protein (737 aa).

7 helical membrane passes run 11-31 (LSLL…LRPL), 36-56 (ETKH…LTFF), 60-80 (WFVT…ILFY), 118-138 (TLLF…WVIY), 142-162 (ILFF…FTPY), 164-184 (ATFA…LLYL), and 200-220 (VLKW…FGLA). The disordered stretch occupies residues 556-611 (PAQFTSSDTKDSGSDSSSSPKKAKEKQKEEKKQPQKEEKQKEKREPAVSKKPSASH). Residues 581 to 603 (KQKEEKKQPQKEEKQKEKREPAV) show a composition bias toward basic and acidic residues. The helical transmembrane segment at 618-638 (LYAALAVLAVLLVAAVLLYVF) threads the bilayer.

Its subcellular location is the cell membrane. This is an uncharacterized protein from Bacillus subtilis (strain 168).